Reading from the N-terminus, the 675-residue chain is UvrABC system protein B (675 aa).

One can recognise a Helicase ATP-binding domain in the interval 32–417 (EGLSDGLAYQ…EHAGQVVEQV (386 aa)). An ATP-binding site is contributed by 45–52 (GVTGSGKT). Positions 98–121 (YYDYYQPEAYVPSRDLFIEKDSAI) match the Beta-hairpin motif. The 167-residue stretch at 436 to 602 (QVDDLMSEIN…QIKKQVKDII (167 aa)) folds into the Helicase C-terminal domain. The region spanning 634–669 (IKEIAKLEKAMQQAARDLQFEEAAVLRDRISNIKEN) is the UVR domain.

Belongs to the UvrB family. As to quaternary structure, forms a heterotetramer with UvrA during the search for lesions. Interacts with UvrC in an incision complex.

It localises to the cytoplasm. In terms of biological role, the UvrABC repair system catalyzes the recognition and processing of DNA lesions. A damage recognition complex composed of 2 UvrA and 2 UvrB subunits scans DNA for abnormalities. Upon binding of the UvrA(2)B(2) complex to a putative damaged site, the DNA wraps around one UvrB monomer. DNA wrap is dependent on ATP binding by UvrB and probably causes local melting of the DNA helix, facilitating insertion of UvrB beta-hairpin between the DNA strands. Then UvrB probes one DNA strand for the presence of a lesion. If a lesion is found the UvrA subunits dissociate and the UvrB-DNA preincision complex is formed. This complex is subsequently bound by UvrC and the second UvrB is released. If no lesion is found, the DNA wraps around the other UvrB subunit that will check the other stand for damage. The sequence is that of UvrABC system protein B from Neisseria gonorrhoeae (strain ATCC 700825 / FA 1090).